A 431-amino-acid chain; its full sequence is Glutamate-1-semialdehyde 2,1-aminomutase (431 aa).

Position 269 is an N6-(pyridoxal phosphate)lysine (Lys269).

It belongs to the class-III pyridoxal-phosphate-dependent aminotransferase family. HemL subfamily. In terms of assembly, homodimer. Requires pyridoxal 5'-phosphate as cofactor.

It localises to the cytoplasm. The enzyme catalyses (S)-4-amino-5-oxopentanoate = 5-aminolevulinate. It functions in the pathway porphyrin-containing compound metabolism; protoporphyrin-IX biosynthesis; 5-aminolevulinate from L-glutamyl-tRNA(Glu): step 2/2. It participates in porphyrin-containing compound metabolism; chlorophyll biosynthesis. The protein is Glutamate-1-semialdehyde 2,1-aminomutase of Prosthecochloris aestuarii (strain DSM 271 / SK 413).